Consider the following 135-residue polypeptide: MPPKSRTAAGAKKVRRKEKKNVAMGEAHIKSTFNNTIVTITDPTGAVISWASAGTVGFKGSRKSTPFAAQMAAEAAGRRAMEHGMKKIDVFVKGPGSGRETAIRSLGAIGLEVGTIQDVTPTPHNGCRPPKRRRV.

The interval 1-22 is disordered; that stretch reads MPPKSRTAAGAKKVRRKEKKNV.

This sequence belongs to the universal ribosomal protein uS11 family. Part of the 30S ribosomal subunit. Interacts with proteins S7 and S18. Binds to IF-3.

Its function is as follows. Located on the platform of the 30S subunit, it bridges several disparate RNA helices of the 16S rRNA. Forms part of the Shine-Dalgarno cleft in the 70S ribosome. In Nocardioides sp. (strain ATCC BAA-499 / JS614), this protein is Small ribosomal subunit protein uS11.